The following is a 131-amino-acid chain: MYPENYEKFEKIIERLREFKGVIIVEGKRDEDSLRKLGVQTEILRLSRSSLADVALLASEHEEVMILTDFDETGEKLAKRLYDLLVGLTKVDMETRRELQFIASKDAKGIEDLYDLWESLRLRFWAPKEGD.

Residues 20 to 103 (KGVIIVEGKR…ETRRELQFIA (84 aa)) form the Toprim domain. Residues Glu-26, Asp-69, and Asp-71 each contribute to the Mg(2+) site.

The protein belongs to the UPF0292 family. Requires Mg(2+) as cofactor.

The protein is UPF0292 protein PF1724 of Pyrococcus furiosus (strain ATCC 43587 / DSM 3638 / JCM 8422 / Vc1).